We begin with the raw amino-acid sequence, 369 residues long: MKYKRIVFKVGTSSITHSDGSLSRGKIQTITRQLAALHHAGHELVLVSSGAVAAGFGALGFKKRPVKIADKQASAAVGQGLLMEEYTANLSSDGIVSAQILLSRADFADKRRYQNAGGALSVLLQRRAVPIINENDTVSVEELKIGDNDTLSAQVAAMIQADLLVLLTDIDGLYTGNPNSNPDAVRLDKIEHINHEIIEMAGGSGSANGTGGMLTKIKAATIAAESGVPVYICSSLKPDALAEAAEHQADGSFFVPRAKGLRTQKQWLAFYSESRGSVYVDEGAEHALSEQGKSLLMSGIAGIEGHFSRMDTVTVYSKATKQPLGKGRVLFGSAAAEDLLKSRKAKGVFIHRDDWISITPEIRLLLTEF.

Residue Lys9 coordinates ATP. The substrate site is built by Ser49, Asp136, and Asn148. ATP contacts are provided by residues 168–169 and 210–216; these read TD and TGGMLTK. A PUA domain is found at 275–355; the sequence is RGSVYVDEGA…KGVFIHRDDW (81 aa).

This sequence belongs to the glutamate 5-kinase family.

It is found in the cytoplasm. The catalysed reaction is L-glutamate + ATP = L-glutamyl 5-phosphate + ADP. The protein operates within amino-acid biosynthesis; L-proline biosynthesis; L-glutamate 5-semialdehyde from L-glutamate: step 1/2. Functionally, catalyzes the transfer of a phosphate group to glutamate to form L-glutamate 5-phosphate. The sequence is that of Glutamate 5-kinase from Neisseria meningitidis serogroup C / serotype 2a (strain ATCC 700532 / DSM 15464 / FAM18).